The sequence spans 365 residues: DNA N6-methyl methyltransferase (365 aa).

This sequence belongs to the MT-A70-like family.

The catalysed reaction is a 2'-deoxyadenosine in DNA + S-adenosyl-L-methionine = an N(6)-methyl-2'-deoxyadenosine in DNA + S-adenosyl-L-homocysteine + H(+). Methylates DNA on the 6th position of adenine (N(6)-methyladenosine). N(6)-methyladenosine (m6A) DNA is involved in epigenetic transgenerational inheritance. This is DNA N6-methyl methyltransferase from Caenorhabditis elegans.